Here is a 329-residue protein sequence, read N- to C-terminus: BRISC and BRCA1-A complex member 1 (329 aa).

Met1 is subject to N-acetylmethionine. The interval 1–84 is disordered; sequence MEVAEPSSPT…VPPPAPEVQI (84 aa). Residue Ser8 is modified to Phosphoserine. Residues 10 to 19 are compositionally biased toward acidic residues; the sequence is TEEEEEEEEH. 4 positions are modified to phosphoserine: Ser29, Ser49, Ser57, and Ser62. Thr65 carries the post-translational modification Phosphothreonine. Ser66 bears the Phosphoserine mark. The segment at 95 to 298 is VWFA-like; it reads VIICLDLSEE…LELHNCMAKL (204 aa).

Belongs to the BABAM1 family. In terms of assembly, component of the ARISC complex, at least composed of UIMC1/RAP80, ABRAXAS1, BRCC3/BRCC36, BABAM2 and BABAM1/NBA1. Component of the BRCA1-A complex, at least composed of BRCA1, BARD1, UIMC1/RAP80, ABRAXAS1, BRCC3/BRCC36, BABAM2 and BABAM1/NBA1. In the BRCA1-A complex, interacts directly with ABRAXAS1 and BABAM2. Component of the BRISC complex, at least composed of ABRAXAS2, BRCC3/BRCC36, BABAM2 and BABAM1/NBA1. Identified in a complex with SHMT2 and the other subunits of the BRISC complex.

Its subcellular location is the cytoplasm. It localises to the nucleus. Functionally, component of the BRCA1-A complex, a complex that specifically recognizes 'Lys-63'-linked ubiquitinated histones H2A and H2AX at DNA lesions sites, leading to target the BRCA1-BARD1 heterodimer to sites of DNA damage at double-strand breaks (DSBs). The BRCA1-A complex also possesses deubiquitinase activity that specifically removes 'Lys-63'-linked ubiquitin on histones H2A and H2AX. In the BRCA1-A complex, it is required for the complex integrity and its localization at DSBs. Component of the BRISC complex, a multiprotein complex that specifically cleaves 'Lys-63'-linked ubiquitin in various substrates. In these 2 complexes, it is probably required to maintain the stability of BABAM2 and help the 'Lys-63'-linked deubiquitinase activity mediated by BRCC3/BRCC36 component. The BRISC complex is required for normal mitotic spindle assembly and microtubule attachment to kinetochores via its role in deubiquitinating NUMA1. Plays a role in interferon signaling via its role in the deubiquitination of the interferon receptor IFNAR1; deubiquitination increases IFNAR1 activity by enhancing its stability and cell surface expression. Down-regulates the response to bacterial lipopolysaccharide (LPS) via its role in IFNAR1 deubiquitination. The sequence is that of BRISC and BRCA1-A complex member 1 (BABAM1) from Homo sapiens (Human).